The following is a 151-amino-acid chain: D-ribose pyranase 1 (151 aa).

The active-site Proton donor is H20. Residues D28, H98, and 121-123 (WGN) each bind substrate.

Belongs to the RbsD / FucU family. RbsD subfamily. In terms of assembly, homodecamer.

The protein localises to the cytoplasm. It catalyses the reaction beta-D-ribopyranose = beta-D-ribofuranose. Its pathway is carbohydrate metabolism; D-ribose degradation; D-ribose 5-phosphate from beta-D-ribopyranose: step 1/2. In terms of biological role, catalyzes the interconversion of beta-pyran and beta-furan forms of D-ribose. In Streptomyces griseus subsp. griseus (strain JCM 4626 / CBS 651.72 / NBRC 13350 / KCC S-0626 / ISP 5235), this protein is D-ribose pyranase 1.